The sequence spans 102 residues: MSNTMRCILIVCVALTLIAAGCNVEASNSRPPRKNDVNTMADAYKFLQDLDTYYGDRARVRFGKRGGPLMEMLRNRELENNMAKSINSGGELIRALDEEEVF.

The signal sequence occupies residues 1–29 (MSNTMRCILIVCVALTLIAAGCNVEASNS). Residues 30 to 32 (RPP) constitute a propeptide that is removed on maturation. F62 is subject to Phenylalanine amide. Residues 66-102 (GGPLMEMLRNRELENNMAKSINSGGELIRALDEEEVF) constitute a propeptide that is removed on maturation.

This sequence belongs to the NPY family.

Its subcellular location is the secreted. In terms of biological role, an integral part of the sensory system that mediates food signaling, providing the neural basis for the regulation of food response; coordinates larval foraging and social behavior changes during development. May have a hormonal role in females. The protein is Neuropeptide F of Drosophila pseudoobscura pseudoobscura (Fruit fly).